The following is a 162-amino-acid chain: UPF0460 protein y4vQ (162 aa).

It belongs to the UPF0460 family.

In Sinorhizobium fredii (strain NBRC 101917 / NGR234), this protein is UPF0460 protein y4vQ.